A 259-amino-acid chain; its full sequence is uncharacterized protein (259 aa).

Residues 4 to 243 form the ABC transporter domain; that stretch reads INLKNINLTR…KILTDFYQEK (240 aa). 36–43 is an ATP binding site; the sequence is GLNGSGKS.

It belongs to the ABC transporter superfamily.

This is an uncharacterized protein from Lactococcus lactis subsp. lactis (strain IL1403) (Streptococcus lactis).